The sequence spans 239 residues: Beta-glucanase (239 aa).

Positions 1–25 (MKRVLLILVTGLFMSLCGITSSVSA) are cleaved as a signal peptide. The GH16 domain occupies 26-239 (QTGGSFFEPF…HYDWMRYRKK (214 aa)). A disulfide bond links cysteine 57 and cysteine 86. Glutamate 134 functions as the Nucleophile in the catalytic mechanism.

Belongs to the glycosyl hydrolase 16 family.

The catalysed reaction is Hydrolysis of (1-&gt;4)-beta-D-glucosidic linkages in beta-D-glucans containing (1-&gt;3)- and (1-&gt;4)-bonds.. The protein is Beta-glucanase (bglA) of Bacillus amyloliquefaciens (Bacillus velezensis).